An 858-amino-acid polypeptide reads, in one-letter code: Transcription factor pytR (858 aa).

Positions 1 to 35 (MAHFSRVASDPSLAPQPSAPSGLDSSTTSSSSTGL) are disordered. The segment at residues 39–65 (CTFCRARKIRCSSGPICSACRERNINC) is a DNA-binding region (zn(2)-C6 fungal-type). The interval 72–99 (RKGRPRRRGTNTSNAQAKKGDQENPTLG) is disordered.

It is found in the nucleus. Functionally, transcription factor that regulates the expression of the gene cluster that mediates the biosynthesis of Pyranterreones, a family of antioxidative compounds. The sequence is that of Transcription factor pytR from Aspergillus terreus (strain NIH 2624 / FGSC A1156).